The sequence spans 316 residues: Beta-ketoacyl-[acyl-carrier-protein] synthase III (316 aa).

Residues Cys112 and His243 contribute to the active site. The interval 244–248 is ACP-binding; that stretch reads QANLR. Residue Asn273 is part of the active site.

Belongs to the thiolase-like superfamily. FabH family. Homodimer.

The protein resides in the cytoplasm. The catalysed reaction is malonyl-[ACP] + acetyl-CoA + H(+) = 3-oxobutanoyl-[ACP] + CO2 + CoA. It participates in lipid metabolism; fatty acid biosynthesis. Its function is as follows. Catalyzes the condensation reaction of fatty acid synthesis by the addition to an acyl acceptor of two carbons from malonyl-ACP. Catalyzes the first condensation reaction which initiates fatty acid synthesis and may therefore play a role in governing the total rate of fatty acid production. Possesses both acetoacetyl-ACP synthase and acetyl transacylase activities. Its substrate specificity determines the biosynthesis of branched-chain and/or straight-chain of fatty acids. This Histophilus somni (strain 129Pt) (Haemophilus somnus) protein is Beta-ketoacyl-[acyl-carrier-protein] synthase III.